We begin with the raw amino-acid sequence, 257 residues long: UPF0246 protein BT_3869 (257 aa).

It belongs to the UPF0246 family.

The sequence is that of UPF0246 protein BT_3869 from Bacteroides thetaiotaomicron (strain ATCC 29148 / DSM 2079 / JCM 5827 / CCUG 10774 / NCTC 10582 / VPI-5482 / E50).